We begin with the raw amino-acid sequence, 41 residues long: Photosystem I reaction center subunit IX (41 aa).

Residues 7-27 (YLSTAPVITAIWLGITAGILI) traverse the membrane as a helical segment.

The protein belongs to the PsaJ family.

The protein resides in the cellular thylakoid membrane. Functionally, may help in the organization of the PsaE and PsaF subunits. This Cyanothece sp. (strain PCC 7425 / ATCC 29141) protein is Photosystem I reaction center subunit IX.